The sequence spans 549 residues: Glucose-6-phosphate isomerase (549 aa).

Residue glutamate 355 is the Proton donor of the active site. Active-site residues include histidine 386 and lysine 514.

This sequence belongs to the GPI family.

The protein resides in the cytoplasm. The catalysed reaction is alpha-D-glucose 6-phosphate = beta-D-fructose 6-phosphate. It functions in the pathway carbohydrate biosynthesis; gluconeogenesis. The protein operates within carbohydrate degradation; glycolysis; D-glyceraldehyde 3-phosphate and glycerone phosphate from D-glucose: step 2/4. Its function is as follows. Catalyzes the reversible isomerization of glucose-6-phosphate to fructose-6-phosphate. The sequence is that of Glucose-6-phosphate isomerase from Desulfatibacillum aliphaticivorans.